We begin with the raw amino-acid sequence, 240 residues long: UDP-2,3-diacylglucosamine hydrolase (240 aa).

5 residues coordinate Mn(2+): Asp9, His11, Asp43, Asn81, and His116. Substrate is bound at residue 81–82 (NR). Substrate contacts are provided by Asp124, Ser162, Lys166, Lys169, and His197. Mn(2+) is bound by residues His197 and His199.

This sequence belongs to the LpxH family. Mn(2+) serves as cofactor.

It is found in the cell inner membrane. It carries out the reaction UDP-2-N,3-O-bis[(3R)-3-hydroxytetradecanoyl]-alpha-D-glucosamine + H2O = 2-N,3-O-bis[(3R)-3-hydroxytetradecanoyl]-alpha-D-glucosaminyl 1-phosphate + UMP + 2 H(+). Its pathway is glycolipid biosynthesis; lipid IV(A) biosynthesis; lipid IV(A) from (3R)-3-hydroxytetradecanoyl-[acyl-carrier-protein] and UDP-N-acetyl-alpha-D-glucosamine: step 4/6. Hydrolyzes the pyrophosphate bond of UDP-2,3-diacylglucosamine to yield 2,3-diacylglucosamine 1-phosphate (lipid X) and UMP by catalyzing the attack of water at the alpha-P atom. Involved in the biosynthesis of lipid A, a phosphorylated glycolipid that anchors the lipopolysaccharide to the outer membrane of the cell. This Neisseria meningitidis serogroup C (strain 053442) protein is UDP-2,3-diacylglucosamine hydrolase.